The sequence spans 178 residues: Translation initiation factor IF-3 (178 aa).

The protein belongs to the IF-3 family. Monomer.

The protein resides in the cytoplasm. Its function is as follows. IF-3 binds to the 30S ribosomal subunit and shifts the equilibrium between 70S ribosomes and their 50S and 30S subunits in favor of the free subunits, thus enhancing the availability of 30S subunits on which protein synthesis initiation begins. The sequence is that of Translation initiation factor IF-3 from Macrococcus caseolyticus (strain JCSC5402) (Macrococcoides caseolyticum).